Reading from the N-terminus, the 398-residue chain is L-rhamnonate dehydratase (398 aa).

Substrate-binding residues include H22 and R48. Residues D214, E241, and E269 each contribute to the Mg(2+) site. H319 (proton acceptor) is an active-site residue. Position 339 (E339) interacts with substrate.

This sequence belongs to the mandelate racemase/muconate lactonizing enzyme family. RhamD subfamily. As to quaternary structure, homooctamer; tetramer of dimers. Mg(2+) serves as cofactor.

The catalysed reaction is L-rhamnonate = 2-dehydro-3-deoxy-L-rhamnonate + H2O. In terms of biological role, catalyzes the dehydration of L-rhamnonate to 2-keto-3-deoxy-L-rhamnonate (KDR). In Verminephrobacter eiseniae (strain EF01-2), this protein is L-rhamnonate dehydratase.